We begin with the raw amino-acid sequence, 509 residues long: ATP synthase subunit alpha (509 aa).

ATP is bound at residue 169–176; that stretch reads GDRQTGKT.

Belongs to the ATPase alpha/beta chains family. In terms of assembly, F-type ATPases have 2 components, CF(1) - the catalytic core - and CF(0) - the membrane proton channel. CF(1) has five subunits: alpha(3), beta(3), gamma(1), delta(1), epsilon(1). CF(0) has three main subunits: a(1), b(2) and c(9-12). The alpha and beta chains form an alternating ring which encloses part of the gamma chain. CF(1) is attached to CF(0) by a central stalk formed by the gamma and epsilon chains, while a peripheral stalk is formed by the delta and b chains.

Its subcellular location is the cell inner membrane. The catalysed reaction is ATP + H2O + 4 H(+)(in) = ADP + phosphate + 5 H(+)(out). Functionally, produces ATP from ADP in the presence of a proton gradient across the membrane. The alpha chain is a regulatory subunit. This is ATP synthase subunit alpha from Methylorubrum extorquens (strain CM4 / NCIMB 13688) (Methylobacterium extorquens).